A 501-amino-acid polypeptide reads, in one-letter code: Actin nucleation-promoting factor WASL (501 aa).

Serine 2 carries the post-translational modification N-acetylserine. The 108-residue stretch at leucine 31 to arginine 138 folds into the WH1 domain. Disordered stretches follow at residues leucine 135–threonine 158 and serine 180–threonine 202. Residues lysine 183–leucine 195 show a composition bias toward basic residues. One can recognise a CRIB domain in the interval isoleucine 200–glycine 213. Serine 239 is subject to Phosphoserine; by TNK2. The residue at position 253 (tyrosine 253) is a Phosphotyrosine; by FAK1 and TNK2. Disordered stretches follow at residues glutamate 263–leucine 405 and glutamine 442–aspartate 501. 2 stretches are compositionally biased toward pro residues: residues alanine 273–leucine 361 and alanine 368–leucine 387. The residue at position 304 (arginine 304) is an Omega-N-methylarginine. 2 consecutive WH2 domains span residues asparagine 401–valine 418 and glycine 429–valine 446. Polar residues predominate over residues glutamine 442–threonine 453. 2 positions are modified to phosphoserine: serine 480 and serine 481. The span at aspartate 482–aspartate 501 shows a compositional bias: acidic residues.

Binds actin and the Arp2/3 complex. Interacts with CDC42. Interacts with FCHSD1. Interacts with FCHSD2. Binds to SH3 domains of GRB2. Interacts with the C-terminal SH3 domain of DNMBP. Interacts with SNX9. Interacts with the WW domains of PRPF40A/FBP11. Interacts with PTK2/FAK1. Interacts with PACSIN1, PACSIN2 and PACSIN3. Interacts with NOSTRIN. Binds to TNK2. Interacts with SNX33. Interacts with NONO (via second RRM domain); the interaction is direct. Component of a multiprotein complex with NONO and SFPQ; associates with the complex via direct interaction with NONO. Post-translationally, phosphorylation at Ser-239, Tyr-253, Ser-480 and Ser-481 enhances actin polymerization activity.

Its subcellular location is the cytoplasm. It localises to the cytoskeleton. The protein resides in the nucleus. Regulates actin polymerization by stimulating the actin-nucleating activity of the Arp2/3 complex. Involved in various processes, such as mitosis and cytokinesis, via its role in the regulation of actin polymerization. Together with CDC42, involved in the extension and maintenance of the formation of thin, actin-rich surface projections called filopodia. In addition to its role in the cytoplasm, also plays a role in the nucleus by regulating gene transcription, probably by promoting nuclear actin polymerization. Binds to HSF1/HSTF1 and forms a complex on heat shock promoter elements (HSE) that negatively regulates HSP90 expression. Plays a role in dendrite spine morphogenesis. This chain is Actin nucleation-promoting factor WASL (Wasl), found in Rattus norvegicus (Rat).